Here is a 114-residue protein sequence, read N- to C-terminus: Large ribosomal subunit protein bL20c (114 aa).

Belongs to the bacterial ribosomal protein bL20 family.

The protein localises to the plastid. Binds directly to 23S ribosomal RNA and is necessary for the in vitro assembly process of the 50S ribosomal subunit. It is not involved in the protein synthesizing functions of that subunit. The protein is Large ribosomal subunit protein bL20c of Prototheca wickerhamii.